We begin with the raw amino-acid sequence, 361 residues long: 3-dehydroquinate synthase (361 aa).

NAD(+) contacts are provided by residues 106–110 (GVVGD), 130–131 (TT), Lys143, and Lys152. Zn(2+) is bound by residues Glu185, His248, and His265.

Belongs to the sugar phosphate cyclases superfamily. Dehydroquinate synthase family. Requires NAD(+) as cofactor. It depends on Co(2+) as a cofactor. Zn(2+) serves as cofactor.

It localises to the cytoplasm. It carries out the reaction 7-phospho-2-dehydro-3-deoxy-D-arabino-heptonate = 3-dehydroquinate + phosphate. The protein operates within metabolic intermediate biosynthesis; chorismate biosynthesis; chorismate from D-erythrose 4-phosphate and phosphoenolpyruvate: step 2/7. Functionally, catalyzes the conversion of 3-deoxy-D-arabino-heptulosonate 7-phosphate (DAHP) to dehydroquinate (DHQ). The protein is 3-dehydroquinate synthase of Leptospira interrogans serogroup Icterohaemorrhagiae serovar copenhageni (strain Fiocruz L1-130).